The chain runs to 224 residues: SNEKLFSCSVCGKCFALKTELTIHCRSHSGEKAFHCTECGKYFQHRSNLRRHQRYHTGDKPFTCFECGTCFVNYSWLMLHIRMHTGERPFSCSECGKRFARRSVLEAHQKIHTGERPFSCSECGKGFIKQCDLARHYRTHTGEKPFPCPECGKCFTQSMQLIRHRRTHTGEKPFACSECGKCFAQNSHLTQHRLGHTGEKPFSCSECGKCFSRRSHLIAHLKSH.

C2H2-type zinc fingers lie at residues 6–28 (FSCS…CRSH), 34–56 (FHCT…QRYH), 62–84 (FTCF…IRMH), 90–112 (FSCS…QKIH), 118–140 (FSCS…YRTH), 146–168 (FPCP…RRTH), 174–196 (FACS…RLGH), and 202–224 (FSCS…LKSH).

Belongs to the krueppel C2H2-type zinc-finger protein family.

The protein localises to the nucleus. Its function is as follows. May be involved in transcriptional regulation. This Xenopus laevis (African clawed frog) protein is Oocyte zinc finger protein XlCOF6.1.